We begin with the raw amino-acid sequence, 51 residues long: Large ribosomal subunit protein eL39 (51 aa).

This sequence belongs to the eukaryotic ribosomal protein eL39 family.

This chain is Large ribosomal subunit protein eL39, found in Methanosarcina acetivorans (strain ATCC 35395 / DSM 2834 / JCM 12185 / C2A).